The chain runs to 295 residues: NAD kinase (295 aa).

Asp-72 acts as the Proton acceptor in catalysis. NAD(+)-binding positions include 72–73, 146–147, Arg-157, Lys-174, Asp-176, 187–192, and Gln-247; these read DG, ND, and TAYALS.

This sequence belongs to the NAD kinase family. Requires a divalent metal cation as cofactor.

The protein localises to the cytoplasm. It catalyses the reaction NAD(+) + ATP = ADP + NADP(+) + H(+). Involved in the regulation of the intracellular balance of NAD and NADP, and is a key enzyme in the biosynthesis of NADP. Catalyzes specifically the phosphorylation on 2'-hydroxyl of the adenosine moiety of NAD to yield NADP. The polypeptide is NAD kinase (Pseudomonas aeruginosa (strain LESB58)).